Reading from the N-terminus, the 777-residue chain is Ethylene receptor 4 (777 aa).

The next 3 helical transmembrane spans lie at 49–69 (LLIA…ATCA), 77–97 (AVLH…LAAF), and 113–133 (AAKV…LTFI). The Cu cation site is built by cysteine 88 and histidine 92. Positions 184–344 (DAHAILRTTA…VVADQAAVAL (161 aa)) constitute a GAF domain. Positions 387-521 (AMCHAMRRPV…NTGSGACRLS (135 aa)) constitute a Histidine kinase domain. Phosphohistidine; by autocatalysis is present on histidine 390. Residues 645-774 (RVLLADDDAM…ALGAQLCRVL (130 aa)) form the Response regulatory domain. Aspartate 696 is modified (4-aspartylphosphate).

The protein belongs to the ethylene receptor family. The cofactor is Cu cation.

It is found in the endoplasmic reticulum membrane. The catalysed reaction is ATP + protein L-histidine = ADP + protein N-phospho-L-histidine.. In terms of biological role, ethylene receptor related to bacterial two-component regulators. Acts as a redundant negative regulator of ethylene signaling. In Oryza sativa subsp. japonica (Rice), this protein is Ethylene receptor 4 (ETR4).